The primary structure comprises 327 residues: Phenylalanine--tRNA ligase alpha subunit (327 aa).

Residue Glu-252 coordinates Mg(2+).

This sequence belongs to the class-II aminoacyl-tRNA synthetase family. Phe-tRNA synthetase alpha subunit type 1 subfamily. Tetramer of two alpha and two beta subunits. Mg(2+) is required as a cofactor.

Its subcellular location is the cytoplasm. It catalyses the reaction tRNA(Phe) + L-phenylalanine + ATP = L-phenylalanyl-tRNA(Phe) + AMP + diphosphate + H(+). This chain is Phenylalanine--tRNA ligase alpha subunit, found in Shigella sonnei (strain Ss046).